The primary structure comprises 235 residues: Repeat element protein (235 aa).

Positions 57 to 235 (IFQELLERLS…ARRKKCRFSQ (179 aa)) are repeat element.

The chain is Repeat element protein from Campoletis sonorensis (CsIV).